We begin with the raw amino-acid sequence, 374 residues long: Anhydro-N-acetylmuramic acid kinase (374 aa).

Residue 9–16 (GTSLDGID) coordinates ATP.

It belongs to the anhydro-N-acetylmuramic acid kinase family.

It carries out the reaction 1,6-anhydro-N-acetyl-beta-muramate + ATP + H2O = N-acetyl-D-muramate 6-phosphate + ADP + H(+). Its pathway is amino-sugar metabolism; 1,6-anhydro-N-acetylmuramate degradation. It participates in cell wall biogenesis; peptidoglycan recycling. Functionally, catalyzes the specific phosphorylation of 1,6-anhydro-N-acetylmuramic acid (anhMurNAc) with the simultaneous cleavage of the 1,6-anhydro ring, generating MurNAc-6-P. Is required for the utilization of anhMurNAc either imported from the medium or derived from its own cell wall murein, and thus plays a role in cell wall recycling. This is Anhydro-N-acetylmuramic acid kinase from Methylobacterium nodulans (strain LMG 21967 / CNCM I-2342 / ORS 2060).